A 119-amino-acid polypeptide reads, in one-letter code: Ribonuclease P protein component (119 aa).

Belongs to the RnpA family. As to quaternary structure, consists of a catalytic RNA component (M1 or rnpB) and a protein subunit.

The catalysed reaction is Endonucleolytic cleavage of RNA, removing 5'-extranucleotides from tRNA precursor.. In terms of biological role, RNaseP catalyzes the removal of the 5'-leader sequence from pre-tRNA to produce the mature 5'-terminus. It can also cleave other RNA substrates such as 4.5S RNA. The protein component plays an auxiliary but essential role in vivo by binding to the 5'-leader sequence and broadening the substrate specificity of the ribozyme. This Syntrophomonas wolfei subsp. wolfei (strain DSM 2245B / Goettingen) protein is Ribonuclease P protein component.